Reading from the N-terminus, the 364-residue chain is Mannose-1-phosphate guanyltransferase (364 aa).

The protein belongs to the transferase hexapeptide repeat family.

Its subcellular location is the cytoplasm. The enzyme catalyses alpha-D-mannose 1-phosphate + GTP + H(+) = GDP-alpha-D-mannose + diphosphate. The protein operates within nucleotide-sugar biosynthesis; GDP-alpha-D-mannose biosynthesis; GDP-alpha-D-mannose from alpha-D-mannose 1-phosphate (GTP route): step 1/1. Involved in cell wall synthesis where it is required for glycosylation. Involved in cell cycle progression through cell-size checkpoint. The sequence is that of Mannose-1-phosphate guanyltransferase (mpg1) from Aspergillus oryzae (strain ATCC 42149 / RIB 40) (Yellow koji mold).